A 662-amino-acid chain; its full sequence is DNA ligase (662 aa).

NAD(+) contacts are provided by residues 31 to 35 (DYEYD), 80 to 81 (SL), and Glu-109. Lys-111 functions as the N6-AMP-lysine intermediate in the catalytic mechanism. NAD(+) is bound by residues Arg-132, Glu-166, Lys-282, and Lys-306. Positions 400, 403, 418, and 423 each coordinate Zn(2+). Positions 581-662 (KVNNIFEGKT…FEEMLKGENI (82 aa)) constitute a BRCT domain.

It belongs to the NAD-dependent DNA ligase family. LigA subfamily. Mg(2+) serves as cofactor. The cofactor is Mn(2+).

The catalysed reaction is NAD(+) + (deoxyribonucleotide)n-3'-hydroxyl + 5'-phospho-(deoxyribonucleotide)m = (deoxyribonucleotide)n+m + AMP + beta-nicotinamide D-nucleotide.. In terms of biological role, DNA ligase that catalyzes the formation of phosphodiester linkages between 5'-phosphoryl and 3'-hydroxyl groups in double-stranded DNA using NAD as a coenzyme and as the energy source for the reaction. It is essential for DNA replication and repair of damaged DNA. In Thermoanaerobacter pseudethanolicus (strain ATCC 33223 / 39E) (Clostridium thermohydrosulfuricum), this protein is DNA ligase.